Reading from the N-terminus, the 106-residue chain is UPF0473 protein LCABL_08490 (106 aa).

Belongs to the UPF0473 family.

The chain is UPF0473 protein LCABL_08490 from Lacticaseibacillus casei (strain BL23) (Lactobacillus casei).